Here is a 271-residue protein sequence, read N- to C-terminus: Mannosyl-3-phosphoglycerate phosphatase (271 aa).

Catalysis depends on aspartate 13, which acts as the Nucleophile. Residues aspartate 13, aspartate 15, and aspartate 214 each contribute to the Mg(2+) site.

This sequence belongs to the HAD-like hydrolase superfamily. MPGP family. Mg(2+) serves as cofactor.

It localises to the cytoplasm. It carries out the reaction 2-O-(alpha-D-mannosyl)-3-phosphoglycerate + H2O = (2R)-2-O-(alpha-D-mannosyl)-glycerate + phosphate. This is Mannosyl-3-phosphoglycerate phosphatase (yedP) from Salmonella choleraesuis (strain SC-B67).